Consider the following 191-residue polypeptide: Endoribonuclease YbeY (191 aa).

Residues H122, H126, and H132 each contribute to the Zn(2+) site. The disordered stretch occupies residues 164-191 (QPKPSGPKAFPDAAERAELDKEVPGGGI). The segment covering 176 to 191 (AAERAELDKEVPGGGI) has biased composition (basic and acidic residues).

Belongs to the endoribonuclease YbeY family. Zn(2+) is required as a cofactor.

It localises to the cytoplasm. Its function is as follows. Single strand-specific metallo-endoribonuclease involved in late-stage 70S ribosome quality control and in maturation of the 3' terminus of the 16S rRNA. The protein is Endoribonuclease YbeY of Corynebacterium aurimucosum (strain ATCC 700975 / DSM 44827 / CIP 107346 / CN-1) (Corynebacterium nigricans).